A 234-amino-acid chain; its full sequence is tRNA1(Val) (adenine(37)-N6)-methyltransferase (234 aa).

The protein belongs to the methyltransferase superfamily. tRNA (adenine-N(6)-)-methyltransferase family.

It localises to the cytoplasm. The catalysed reaction is adenosine(37) in tRNA1(Val) + S-adenosyl-L-methionine = N(6)-methyladenosine(37) in tRNA1(Val) + S-adenosyl-L-homocysteine + H(+). Its function is as follows. Specifically methylates the adenine in position 37 of tRNA(1)(Val) (anticodon cmo5UAC). The sequence is that of tRNA1(Val) (adenine(37)-N6)-methyltransferase from Aliivibrio fischeri (strain ATCC 700601 / ES114) (Vibrio fischeri).